We begin with the raw amino-acid sequence, 517 residues long: Squalene epoxidase 6 (517 aa).

2 helical membrane passes run 3 to 23 and 45 to 65; these read FTHV…VFYL and AADV…YALA. Residues 55–56, 75–76, R83, F88, R156, V172, D336, and M349 contribute to the FAD site; these read VG and ER. The helical transmembrane segment at 447-467 threads the bilayer; the sequence is LVYHLCAITLSSIGQLLSPFP.

Belongs to the squalene monooxygenase family. Requires FAD as cofactor. Expressed in seedlings, leaves, stems, inflorescences and siliques.

The protein localises to the membrane. The catalysed reaction is squalene + reduced [NADPH--hemoprotein reductase] + O2 = (S)-2,3-epoxysqualene + oxidized [NADPH--hemoprotein reductase] + H2O + H(+). It participates in terpene metabolism; lanosterol biosynthesis; lanosterol from farnesyl diphosphate: step 2/3. Catalyzes the stereospecific oxidation of squalene to (S)-2,3-epoxysqualene, and is considered to be a rate-limiting enzyme in steroid biosynthesis. In Arabidopsis thaliana (Mouse-ear cress), this protein is Squalene epoxidase 6 (SQE6).